The chain runs to 647 residues: tRNA 5-methylaminomethyl-2-thiouridine biosynthesis bifunctional protein MnmC (647 aa).

Residues Met1 to Ser227 are tRNA (mnm(5)s(2)U34)-methyltransferase. The segment at Val256 to Lys647 is FAD-dependent cmnm(5)s(2)U34 oxidoreductase.

The protein in the N-terminal section; belongs to the methyltransferase superfamily. tRNA (mnm(5)s(2)U34)-methyltransferase family. This sequence in the C-terminal section; belongs to the DAO family. Requires FAD as cofactor.

The protein localises to the cytoplasm. The catalysed reaction is 5-aminomethyl-2-thiouridine(34) in tRNA + S-adenosyl-L-methionine = 5-methylaminomethyl-2-thiouridine(34) in tRNA + S-adenosyl-L-homocysteine + H(+). Functionally, catalyzes the last two steps in the biosynthesis of 5-methylaminomethyl-2-thiouridine (mnm(5)s(2)U) at the wobble position (U34) in tRNA. Catalyzes the FAD-dependent demodification of cmnm(5)s(2)U34 to nm(5)s(2)U34, followed by the transfer of a methyl group from S-adenosyl-L-methionine to nm(5)s(2)U34, to form mnm(5)s(2)U34. In Leptospira interrogans serogroup Icterohaemorrhagiae serovar copenhageni (strain Fiocruz L1-130), this protein is tRNA 5-methylaminomethyl-2-thiouridine biosynthesis bifunctional protein MnmC.